The primary structure comprises 427 residues: Serine--tRNA ligase (427 aa).

Residue 230-232 coordinates L-serine; sequence TSE. Residues 260–262 and V276 contribute to the ATP site; that span reads RRE. Residue E283 coordinates L-serine. ATP is bound at residue 347 to 350; the sequence is ELTS. L-serine is bound at residue T387.

Belongs to the class-II aminoacyl-tRNA synthetase family. Type-1 seryl-tRNA synthetase subfamily. In terms of assembly, homodimer. The tRNA molecule binds across the dimer.

It is found in the cytoplasm. The enzyme catalyses tRNA(Ser) + L-serine + ATP = L-seryl-tRNA(Ser) + AMP + diphosphate + H(+). It catalyses the reaction tRNA(Sec) + L-serine + ATP = L-seryl-tRNA(Sec) + AMP + diphosphate + H(+). Its pathway is aminoacyl-tRNA biosynthesis; selenocysteinyl-tRNA(Sec) biosynthesis; L-seryl-tRNA(Sec) from L-serine and tRNA(Sec): step 1/1. Catalyzes the attachment of serine to tRNA(Ser). Is also able to aminoacylate tRNA(Sec) with serine, to form the misacylated tRNA L-seryl-tRNA(Sec), which will be further converted into selenocysteinyl-tRNA(Sec). The sequence is that of Serine--tRNA ligase from Micrococcus luteus (strain ATCC 4698 / DSM 20030 / JCM 1464 / CCM 169 / CCUG 5858 / IAM 1056 / NBRC 3333 / NCIMB 9278 / NCTC 2665 / VKM Ac-2230) (Micrococcus lysodeikticus).